The following is a 355-amino-acid chain: IGF-like family receptor 1 (355 aa).

The N-terminal stretch at 1–22 (MGPGRCLLTALLLLALAPPPEA) is a signal peptide. Residues 23 to 163 (SQYCGRLEYW…PQQAWPNFLP (141 aa)) are Extracellular-facing. Residues 120 to 147 (KGHCPLTPGNPGAPSSQERSSPASSIAW) form a disordered region. Low complexity predominate over residues 132-144 (APSSQERSSPASS). The chain crosses the membrane as a helical span at residues 164-184 (LVVLVLLLTLAVIAILLFILL). The Cytoplasmic portion of the chain corresponds to 185 to 355 (WHLCWPKEKA…KLGSSGVCWA (171 aa)).

It localises to the cell membrane. Probable cell membrane receptor for the IGF-like family proteins. Binds IGFL1 and IGFL3 with a higher affinity. May also bind IGFL2. This chain is IGF-like family receptor 1 (IGFLR1), found in Homo sapiens (Human).